The chain runs to 806 residues: Transitional endoplasmic reticulum ATPase (806 aa).

At A2 the chain carries N-acetylalanine. Phosphoserine is present on residues S3 and S7. K8 is covalently cross-linked (Glycyl lysine isopeptide (Lys-Gly) (interchain with G-Cter in SUMO2)). The residue at position 13 (S13) is a Phosphoserine. A Glycyl lysine isopeptide (Lys-Gly) (interchain with G-Cter in SUMO2) cross-link involves residue K18. Phosphoserine is present on S37. 247 to 253 (PGTGKTL) contributes to the ATP binding site. At K315 the chain carries N6,N6,N6-trimethyllysine; by VCPKMT. Positions 348 and 384 each coordinate ATP. A Phosphothreonine modification is found at T436. S462 carries the phosphoserine modification. 2 positions are modified to N6-acetyllysine: K502 and K505. 521–526 (GCGKTL) is a binding site for ATP. The residue at position 668 (K668) is an N6-acetyllysine; alternate. N6-succinyllysine; alternate is present on K668. S702 bears the Phosphoserine mark. A disordered region spans residues 708-727 (RRERERQTNPSAMEVEEDDP). An N6-acetyllysine modification is found at K754. The disordered stretch occupies residues 768–806 (FGSFRFPSGNQGGAGPSQGSGGGTGGSVYTEDNDDDLYG). Phosphoserine is present on residues S770, S775, and S787. Residues 777-793 (NQGGAGPSQGSGGGTGG) are compositionally biased toward gly residues. The tract at residues 797 to 806 (TEDNDDDLYG) is interaction with UBXN6. Position 805 is a phosphotyrosine (Y805).

This sequence belongs to the AAA ATPase family. Homohexamer. Forms a ring-shaped particle of 12.5 nm diameter, that displays 6-fold radial symmetry. Part of a ternary complex containing STX5A, NSFL1C and VCP. NSFL1C forms a homotrimer that binds to one end of a VCP homohexamer. The complex binds to membranes enriched in phosphatidylethanolamine-containing lipids and promotes Golgi membrane fusion. Binds to a heterodimer of NPLOC4 and UFD1, binding to this heterodimer inhibits Golgi-membrane fusion. Interaction with VCIP135 leads to dissociation of the complex via ATP hydrolysis by VCP. Part of a ternary complex containing NPLOC4, UFD1 and VCP. Interacts with NSFL1C-like protein p37; the complex has membrane fusion activity and is required for Golgi and endoplasmic reticulum biogenesis. Interacts with SELENOS and SYVN1, as well as with DERL1 (via SHP-box motif), DERL2 and DERL3; which probably transfer misfolded proteins from the ER to VCP. Interacts with SVIP and DERL1. Component of a complex required to couple retrotranslocation, ubiquitination and deglycosylation composed of NGLY1, SAKS1, AMFR, VCP and RAD23B. Part of a complex composed of STUB1/CHIP, VCP/p97, CHRNA3, and UBXN2A that modulates the ubiquitination and endoplasmic reticulum-associated degradation (ERAD) of CHRNA3. Within the complex UBXN2A acts as a scaffold protein required for the interaction of CHRNA3 with VCP/p97, this interaction also inhibits CHRNA3 ubiquitination by STUB1/CHIP and subsequently ERAD. Interacts with UBXN2A (via UBX domain); the interaction is required for the interaction of CHRNA3 in the STUB1-VCP-UBXN2A complex. Directly interacts with UBXN4 and RNF19A. Interacts with CASR. Interacts with UBE4B and YOD1. Interacts with clathrin. Interacts with RNF103. Interacts with TRIM13 and TRIM21. Component of a VCP/p97-AMFR/gp78 complex that participates in the final step of the endoplasmic reticulum-associated degradation (ERAD) of HMGCR. Interacts directly with AMFR/gp78 (via its VIM). Interacts with RHBDD1 (via C-terminal domain). Interacts with SPRTN; leading to recruitment to stalled replication forks. Interacts with WASHC5. Interacts with UBOX5. Interacts (via N-terminus) with UBXN7, UBXN8, and probably several other UBX domain-containing proteins (via UBX domains); the interactions are mutually exclusive with VIM-dependent interactions such as those with AMFR and SELENOS. Forms a complex with UBQLN1 and UBXN4. Interacts (via the PIM motif) with RNF31 (via the PUB domain). Interacts with RIGI and RNF125; interaction takes place when RIGI is ubiquitinated via 'Lys-63'-linked ubiquitin on its CARD domains, leading to recruit RNF125 and promote ubiquitination and degradation of RIGI. Interacts with BAG6. Interacts with UBXN10. Interacts with UBXN6; the interaction with UBXN6 is direct and competitive with UFD1. Forms a ternary complex with CAV1 and UBXN6. Interacts with PLAA, UBXN6 and YOD1; may form a complex involved in macroautophagy. Interacts with ANKZF1. Interacts with ubiquitin-binding protein FAF1. Interacts with ZFAND2B (via VIM motif); the interaction is direct. Interacts with ZFAND1 (via its ubiquitin-like region); this interaction occurs in an arsenite-dependent manner. Interacts with CCDC47. Interacts with LMBR1L and UBAC2. Interacts with ATXN3. Interacts with TEX264; bridging VCP to covalent DNA-protein cross-links (DPCs). Mg(2+) is required as a cofactor. In terms of processing, ISGylated. Post-translationally, methylation at Lys-315 catalyzed by VCPKMT is increased in the presence of ASPSCR1. Lys-315 methylation may decrease ATPase activity. Phosphorylated by tyrosine kinases in response to T-cell antigen receptor activation. Phosphorylated in mitotic cells.

Its subcellular location is the cytoplasm. The protein localises to the cytosol. It is found in the endoplasmic reticulum. It localises to the nucleus. The protein resides in the stress granule. It carries out the reaction ATP + H2O = ADP + phosphate + H(+). Necessary for the fragmentation of Golgi stacks during mitosis and for their reassembly after mitosis. Involved in the formation of the transitional endoplasmic reticulum (tER). The transfer of membranes from the endoplasmic reticulum to the Golgi apparatus occurs via 50-70 nm transition vesicles which derive from part-rough, part-smooth transitional elements of the endoplasmic reticulum (tER). Vesicle budding from the tER is an ATP-dependent process. The ternary complex containing UFD1, VCP and NPLOC4 binds ubiquitinated proteins and is necessary for the export of misfolded proteins from the ER to the cytoplasm, where they are degraded by the proteasome. The NPLOC4-UFD1-VCP complex regulates spindle disassembly at the end of mitosis and is necessary for the formation of a closed nuclear envelope. Regulates E3 ubiquitin-protein ligase activity of RNF19A. Component of the VCP/p97-AMFR/gp78 complex that participates in the final step of the sterol-mediated ubiquitination and endoplasmic reticulum-associated degradation (ERAD) of HMGCR. Mediates the endoplasmic reticulum-associated degradation of CHRNA3 in cortical neurons as part of the STUB1-VCP-UBXN2A complex. Involved in endoplasmic reticulum stress-induced pre-emptive quality control, a mechanism that selectively attenuates the translocation of newly synthesized proteins into the endoplasmic reticulum and reroutes them to the cytosol for proteasomal degradation. Involved in clearance process by mediating G3BP1 extraction from stress granules. Also involved in DNA damage response: recruited to double-strand breaks (DSBs) sites in a RNF8- and RNF168-dependent manner and promotes the recruitment of TP53BP1 at DNA damage sites. Recruited to stalled replication forks by SPRTN: may act by mediating extraction of DNA polymerase eta (POLH) to prevent excessive translesion DNA synthesis and limit the incidence of mutations induced by DNA damage. Together with SPRTN metalloprotease, involved in the repair of covalent DNA-protein cross-links (DPCs) during DNA synthesis. Involved in interstrand cross-link repair in response to replication stress by mediating unloading of the ubiquitinated CMG helicase complex. Mediates extraction of PARP1 trapped to chromatin: recognizes and binds ubiquitinated PARP1 and promotes its removal. Required for cytoplasmic retrotranslocation of stressed/damaged mitochondrial outer-membrane proteins and their subsequent proteasomal degradation. Essential for the maturation of ubiquitin-containing autophagosomes and the clearance of ubiquitinated protein by autophagy. Acts as a negative regulator of type I interferon production by interacting with RIGI: interaction takes place when RIGI is ubiquitinated via 'Lys-63'-linked ubiquitin on its CARD domains, leading to recruit RNF125 and promote ubiquitination and degradation of RIGI. May play a role in the ubiquitin-dependent sorting of membrane proteins to lysosomes where they undergo degradation. May more particularly play a role in caveolins sorting in cells. By controlling the steady-state expression of the IGF1R receptor, indirectly regulates the insulin-like growth factor receptor signaling pathway. The chain is Transitional endoplasmic reticulum ATPase (VCP) from Sus scrofa (Pig).